Here is a 229-residue protein sequence, read N- to C-terminus: 2-C-methyl-D-erythritol 4-phosphate cytidylyltransferase (229 aa).

The protein belongs to the IspD/TarI cytidylyltransferase family. IspD subfamily.

The enzyme catalyses 2-C-methyl-D-erythritol 4-phosphate + CTP + H(+) = 4-CDP-2-C-methyl-D-erythritol + diphosphate. The protein operates within isoprenoid biosynthesis; isopentenyl diphosphate biosynthesis via DXP pathway; isopentenyl diphosphate from 1-deoxy-D-xylulose 5-phosphate: step 2/6. In terms of biological role, catalyzes the formation of 4-diphosphocytidyl-2-C-methyl-D-erythritol from CTP and 2-C-methyl-D-erythritol 4-phosphate (MEP). The sequence is that of 2-C-methyl-D-erythritol 4-phosphate cytidylyltransferase from Clostridium botulinum (strain Loch Maree / Type A3).